The primary structure comprises 504 residues: MDEFQRYGNKHKSWQQCFLYPLFFREDLYTIAHDLYLDKSSSSEPTELSISNFFSFPTVKRLIRRIRQQNDSNSIGLFRNCDPNRFINRNRNSYSELVLEGLTVILEVSLAMQSKHFIEGMDGWKSIRSIHCIFTLMEDKFPYSNYVSDIRVPYSIHPEILVRTFRRWIRDAPSLHLLRSILHEWRNSFSAENLQKALVPPRENRRFSLFLWNSYVYECESFLVSLLKQFYHSRSLLYGSFPDRTHFDKKIKHIIIFPVKISTKRIWLLKYPFIYYVRYGERSLIALKGTHLQVKRCRYHLFNFWQYYFHLWSQPYRVCILELSKIYFYFLGHFLSFKMKTLVVRTKMLDDLLISDIIANEFNPIAPIRSILLYLTKERFCDISGQPISRLSWTNLSDDDILDRFDRMCRNLFHYYSGSINKDSLYHIKYILLLSCAKTLACKHKSTIRLVREEPGSELFTKSFSKEREFIYSSFSKTRSQRERIWNSDILQINPLANSYTINK.

This sequence belongs to the intron maturase 2 family. MatK subfamily.

Its subcellular location is the plastid. The protein localises to the chloroplast. Functionally, usually encoded in the trnK tRNA gene intron. Probably assists in splicing its own and other chloroplast group II introns. This Taxus baccata (English yew) protein is Maturase K.